The sequence spans 327 residues: E3 ubiquitin-protein ligase SINAT4 (327 aa).

A disordered region spans residues 1-27 (METDSMECVSSTGNEIHQNGNGHQSYQ). The span at 8-27 (CVSSTGNEIHQNGNGHQSYQ) shows a compositional bias: polar residues. An RING-type zinc finger spans residues 64 to 100 (CPVCTYSMYPPIHQCHNGHTLCSTCKVRVHNRCPTCR). Residues 114–307 (VAESLELPCK…KELKLRVTGK (194 aa)) form an SBD region. The segment at 117–177 (SLELPCKFYN…LVAHLRDDHK (61 aa)) adopts an SIAH-type zinc-finger fold. Positions 122, 129, 141, 145, 152, 159, 171, and 176 each coordinate Zn(2+).

The protein belongs to the SINA (Seven in absentia) family. Interacts with SINAT6. Interacts with WAV3. Interacts with FREE1. Interacts with ELC/VPS23A.

The protein localises to the endosome. The protein resides in the multivesicular body. Its subcellular location is the cytoplasmic vesicle. It localises to the autophagosome. The enzyme catalyses S-ubiquitinyl-[E2 ubiquitin-conjugating enzyme]-L-cysteine + [acceptor protein]-L-lysine = [E2 ubiquitin-conjugating enzyme]-L-cysteine + N(6)-ubiquitinyl-[acceptor protein]-L-lysine.. Its pathway is protein modification; protein ubiquitination. Functionally, E3 ubiquitin-protein ligase that mediates ubiquitination and subsequent proteasomal degradation of target proteins. E3 ubiquitin ligases accept ubiquitin from an E2 ubiquitin-conjugating enzyme in the form of a thioester and then directly transfers the ubiquitin to targeted substrates. It probably triggers the ubiquitin-mediated degradation of different substrates. Modulates directly the ubiquitination and proteasomal-dependent degradation of FREE1, a component of the ESCRT-I complex. Modulates directly the ubiquitination and proteasomal-dependent degradation of ELC/VPS23A, a component of the ESCRT-I complex. This chain is E3 ubiquitin-protein ligase SINAT4, found in Arabidopsis thaliana (Mouse-ear cress).